The chain runs to 239 residues: MPASWPPRTVIRKASGLRTLESALYRNGLGPVAGVDEVGRGACAGPLVVAACVLGPNRLESLAALDDSKKLGEKERERLFPVIRRYALAYHVVFIPSGEVDRRGVHVANIEGMRRAVAGLSVRPGYVLSDGFRVPGLPMPSLPVVGGDAAAACIAAASVLAKVSRDRLMVAMEREHPGYGFAEHKGYSTPAHTAALAELGPCAQHRYSFINVRRLVTAGTPQISGGLTDAEPGQCCELG.

One can recognise an RNase H type-2 domain in the interval 30–221 (GPVAGVDEVG…VRRLVTAGTP (192 aa)). A divalent metal cation is bound by residues aspartate 36, glutamate 37, and aspartate 130.

The protein belongs to the RNase HII family. Requires Mn(2+) as cofactor. Mg(2+) is required as a cofactor.

It localises to the cytoplasm. The enzyme catalyses Endonucleolytic cleavage to 5'-phosphomonoester.. Functionally, endonuclease that specifically degrades the RNA of RNA-DNA hybrids. The sequence is that of Ribonuclease HII from Mycobacterium sp. (strain JLS).